Here is a 419-residue protein sequence, read N- to C-terminus: Transcription factor IIIB 50 kDa subunit (419 aa).

The TFIIB-type zinc-finger motif lies at 2–36 (PGRGRCPDCGSTELVEDSHYSQSQLVCSDCGCVVT). The Zn(2+) site is built by cysteine 7, cysteine 10, cysteine 28, and cysteine 31. 2 repeat units span residues 72-157 (GLRR…MQIV) and 173-249 (VKTY…SLAR). An interaction with target DNA region spans residues 108–114 (AARLQKK). The segment covering 314 to 326 (DGTAEVETREKEP) has biased composition (basic and acidic residues). The interval 314–351 (DGTAEVETREKEPPGWGQGQGEGEVGNNSLGLPQGKRP) is disordered. Serine 353 carries the post-translational modification Phosphoserine. Positions 357 to 363 (LLPPCML) are required for the formation of a ternary complex with DNA and TBP; not required for interaction with TBP in the absence of DNA. Residue cysteine 361 is modified to Cysteine sulfenic acid (-SOH). The interval 365–419 (SPKRICPVPPVSTVTGDENISDSEIEQYLRTPQEVRDFQRAQAARQAATSVPNPP) is required for interaction with TBP and formation of a ternary complex with DNA and TBP.

This sequence belongs to the TFIIB family. As to quaternary structure, component of TFIIIB complexes. The TFIIIB complex has two activities, alpha and beta. The TFIIIB-alpha activity complex is composed of TBP, BDP1, and a complex containing both BRF2 and at least four stably associated proteins; this complex inhibits the transcription by pol III via its phosphorylation by CK2; YY1 facilitates the TFIIIB-alpha complex formation. Interacts with TBP; this interaction promotes recruitment of BRF2 to TATA box-containing promoters. Interacts with TBP and the BURE sequence (GC-rich sequence downstream from the TATA box) to form a strong ternary complex which is joined by BDP1; this ternary complex stimulates pol III transcription. Forms a trimeric complex composed of TBP, BRF2 and mini-SNAPc complex (SNAP43, SNAP50, and the N-terminal third of SNAP190) on the promoter. Assembly of the TBP-BRF2 complex is stimulated by SNAP190. Interacts with MAF1 and SNAPC4. Post-translationally, in response to oxidative stress, Cys-361 is reversibly oxidized to cysteine sulfenic acid. Oxidation of Cys-361 impairs formation of a ternary complex with TBP and DNA and down-regulates expression of target genes in response to oxidative stress.

It is found in the nucleus. In terms of biological role, general activator of RNA polymerase III transcription. Factor exclusively required for RNA polymerase III transcription of genes with promoter elements upstream of the initiation sites. Contributes to the regulation of gene expression; functions as activator in the absence of oxidative stress. Down-regulates expression of target genes in response to oxidative stress. Overexpression protects cells against apoptosis in response to oxidative stress. This chain is Transcription factor IIIB 50 kDa subunit (BRF2), found in Homo sapiens (Human).